The following is a 278-amino-acid chain: Translation initiation factor IF-3, mitochondrial (278 aa).

The transit peptide at 1 to 31 (MAALFLKRLTLQTVKSENSCIRCFGKHILQK) directs the protein to the mitochondrion. Positions 249 to 278 (KAYKETQETQERDTLNKDHGNDKESNVLHQ) are disordered.

Belongs to the IF-3 family.

The protein resides in the mitochondrion. IF-3 binds to the 28S ribosomal subunit and shifts the equilibrium between 55S ribosomes and their 39S and 28S subunits in favor of the free subunits, thus enhancing the availability of 28S subunits on which protein synthesis initiation begins. This chain is Translation initiation factor IF-3, mitochondrial (MTIF3), found in Homo sapiens (Human).